The following is a 455-amino-acid chain: Golgi pH regulator (455 aa).

Helical transmembrane passes span 46-66, 79-99, 111-131, and 150-170; these read ITFAFSCTMFELIIFEILGAL, LYVILLVLIFVVPFYIGYFVV, LFACVVWFTFMYFFWKLGDPF, and VGVIGVTLMALLSGFGAVNCP. Asparagine 180 and asparagine 243 each carry an N-linked (GlcNAc...) asparagine glycan. Helical transmembrane passes span 290-310, 343-363, 378-398, and 425-445; these read GYFFSIYCVWKIFMATINIVF, ISFILVGIIIVTSIRGLLITL, VIVLVLAQIMGMYFVSSVLLM, and WFDVIFLVSALSSILFLYLAH.

It belongs to the Golgi pH regulator (TC 1.A.38) family. In terms of assembly, homotrimer.

It is found in the golgi apparatus membrane. The enzyme catalyses iodide(out) = iodide(in). The catalysed reaction is chloride(in) = chloride(out). It carries out the reaction bromide(in) = bromide(out). It catalyses the reaction fluoride(in) = fluoride(out). Voltage-gated channel that enables the transfer of anions such as iodide, chloride, bromide and fluoride which may function in counter-ion conductance and participates in Golgi acidification. This is Golgi pH regulator from Salmo salar (Atlantic salmon).